Here is an 88-residue protein sequence, read N- to C-terminus: MDDVEMKVMEMKMISKMFQGILDACSAKCISKYNEGDLNVGESVCAERCVQKWMETFKKVQSKMSGTQPGQEVPQEAPAAAPEKKGWF.

The short motif at 25–49 is the Twin CX3C motif element; sequence CSAKCISKYNEGDLNVGESVCAERC. Intrachain disulfides connect cysteine 25-cysteine 49 and cysteine 29-cysteine 45. Positions 63-88 are disordered; it reads KMSGTQPGQEVPQEAPAAAPEKKGWF. The span at 68 to 81 shows a compositional bias: low complexity; sequence QPGQEVPQEAPAAA.

The protein belongs to the small Tim family. Heterohexamer; composed of 3 copies of timm9 and 3 copies of timm10, named soluble 70 kDa complex. Associates directly with the TIM22 complex, whose core is composed of timm22. Interacts with the transmembrane regions of multi-pass transmembrane proteins in transit.

The protein resides in the mitochondrion inner membrane. Component of the TIM22 complex, a complex that mediates the import and insertion of multi-pass transmembrane proteins into the mitochondrial inner membrane. The TIM22 complex forms a twin-pore translocase that uses the membrane potential as external driving force. This Dictyostelium discoideum (Social amoeba) protein is Mitochondrial import inner membrane translocase subunit Tim10 (timm10).